The following is a 507-amino-acid chain: Desmethyl-deoxy-podophyllotoxin synthase (507 aa).

A helical membrane pass occupies residues 1–21 (MEFLSFPLSSALLIILLFMLV). A heme-binding site is contributed by Cys440.

Belongs to the cytochrome P450 family. Heme serves as cofactor. As to expression, rhizome-specific expression.

It is found in the membrane. It carries out the reaction (-)-deoxypodophyllotoxin + reduced [NADPH--hemoprotein reductase] + O2 = (-)-4'-desmethyl-deoxypodophyllotoxin + formaldehyde + oxidized [NADPH--hemoprotein reductase] + H2O + H(+). It participates in aromatic compound metabolism; phenylpropanoid biosynthesis. Its function is as follows. Cytochrome P450 involved in the biosynthesis of etoposide, a chemotherapeutic compound of the topoisomerase inhibitor family. Catalyzes the conversion of deoxypodophyllotoxin to desmethyl-deoxypodophyllotoxin. This chain is Desmethyl-deoxy-podophyllotoxin synthase, found in Sinopodophyllum hexandrum (Himalayan may apple).